We begin with the raw amino-acid sequence, 180 residues long: DNA replication regulator protein HobA (180 aa).

Ca(2+) is bound by residues glutamate 17, glutamate 27, glutamate 140, glutamate 143, and asparagine 176.

As to quaternary structure, forms dimers and homotetramers. Interacts with domains I and II (residues 1-112) of DnaA. In a crystal with domains I and II of DnaA HobA forms tetramers with DnaA fragments bound at the dimer interface of the tetramer. It depends on Ca(2+) as a cofactor.

Required for DNA replication initiation. Increases binding of DnaA to oriC region. The polypeptide is DNA replication regulator protein HobA (Helicobacter pylori (strain ATCC 700392 / 26695) (Campylobacter pylori)).